A 275-amino-acid polypeptide reads, in one-letter code: NH(3)-dependent NAD(+) synthetase (275 aa).

43-50 (GISGGVDS) is an ATP binding site. Aspartate 49 provides a ligand contact to Mg(2+). Arginine 145 is a deamido-NAD(+) binding site. Threonine 165 provides a ligand contact to ATP. Glutamate 170 provides a ligand contact to Mg(2+). Residues lysine 178 and aspartate 185 each coordinate deamido-NAD(+). 2 residues coordinate ATP: lysine 194 and threonine 216. 265–266 (HK) provides a ligand contact to deamido-NAD(+).

It belongs to the NAD synthetase family. As to quaternary structure, homodimer.

It carries out the reaction deamido-NAD(+) + NH4(+) + ATP = AMP + diphosphate + NAD(+) + H(+). The protein operates within cofactor biosynthesis; NAD(+) biosynthesis; NAD(+) from deamido-NAD(+) (ammonia route): step 1/1. Functionally, catalyzes the ATP-dependent amidation of deamido-NAD to form NAD. Uses ammonia as a nitrogen source. The protein is NH(3)-dependent NAD(+) synthetase of Shewanella denitrificans (strain OS217 / ATCC BAA-1090 / DSM 15013).